We begin with the raw amino-acid sequence, 290 residues long: Protein 3 (290 aa).

The chain is Protein 3 from Lettuce big-vein associated virus (isolate Japan/Kagawa) (LBVaV).